The primary structure comprises 623 residues: Frizzled and smoothened-like protein M (623 aa).

The signal sequence occupies residues 1 to 18; sequence MKSIFIIIFILYVFQVNS. At 19-243 the chain is on the extracellular side; that stretch reads QTIYPIDPSG…WDQLYNLSNT (225 aa). Residues 25–163 form the FZ domain; sequence DPSGKCEQYI…NYSEFNLTNY (139 aa). 2 disulfide bridges follow: C30-C100 and C42-C93. N57, N106, N109, N154, N159, N169, N199, and N239 each carry an N-linked (GlcNAc...) asparagine glycan. The helical transmembrane segment at 244–264 threads the bilayer; it reads LAVLSTFGSLYLLVTFIILNP. The Cytoplasmic portion of the chain corresponds to 265 to 273; the sequence is KVTSFDRMY. Residues 274-294 form a helical membrane-spanning segment; that stretch reads GFFNGSVFMMSLSGVILFIAG. Over 295 to 317 the chain is Extracellular; it reads GPRALIKDGGARISVFEDPLCSS. A helical transmembrane segment spans residues 318–338; it reads TGFIFQLFAINAILFWAYMGF. Residues 339 to 354 lie on the Cytoplasmic side of the membrane; sequence DLWWRVKYITKPLNIQ. A helical membrane pass occupies residues 355 to 375; sequence KYYVPIAFTISFIFSVIPLAT. At 376 to 397 the chain is on the extracellular side; that stretch reads KNYRMVRGNIHCWVHKAVLQNT. Residues 398–418 traverse the membrane as a helical segment; it reads LFFGPLGLTLTISTGFIGLVI. At 419 to 439 the chain is on the cytoplasmic side; the sequence is YEIYKIVKATGRGGIMKLEIK. Residues 440–460 traverse the membrane as a helical segment; it reads PILNIVLIYFSFVYIFAFNFH. The Extracellular portion of the chain corresponds to 461-494; sequence NDNNSKNTYGSIDEFFQCTLESDDPSKCTVGGPS. N-linked (GlcNAc...) asparagine glycosylation occurs at N463. A helical transmembrane segment spans residues 495–515; the sequence is IGSLGYFIYCIRIYGIYCFFL. At 516-623 the chain is on the cytoplasmic side; the sequence is QGLNERAFKI…DIEIGSVNIK (108 aa). Residues 552 to 590 form a disordered region; the sequence is PSESGNSSTTAGTSTTINNSNINKKNNNSKPTLSTMDSN. Over residues 555–580 the composition is skewed to low complexity; sequence SGNSSTTAGTSTTINNSNINKKNNNS.

This sequence belongs to the G-protein coupled receptor Fz/Smo family.

The protein localises to the membrane. In Dictyostelium discoideum (Social amoeba), this protein is Frizzled and smoothened-like protein M (fslM-1).